A 264-amino-acid chain; its full sequence is Methylthioribulose-1-phosphate dehydratase (264 aa).

Substrate is bound at residue cysteine 110. Zn(2+) is bound by residues histidine 128 and histidine 130. Glutamate 151 acts as the Proton donor/acceptor in catalysis. Histidine 213 provides a ligand contact to Zn(2+).

This sequence belongs to the aldolase class II family. MtnB subfamily. Zn(2+) is required as a cofactor.

The protein resides in the cytoplasm. It carries out the reaction 5-(methylsulfanyl)-D-ribulose 1-phosphate = 5-methylsulfanyl-2,3-dioxopentyl phosphate + H2O. It functions in the pathway amino-acid biosynthesis; L-methionine biosynthesis via salvage pathway; L-methionine from S-methyl-5-thio-alpha-D-ribose 1-phosphate: step 2/6. Catalyzes the dehydration of methylthioribulose-1-phosphate (MTRu-1-P) into 2,3-diketo-5-methylthiopentyl-1-phosphate (DK-MTP-1-P). The chain is Methylthioribulose-1-phosphate dehydratase from Vanderwaltozyma polyspora (strain ATCC 22028 / DSM 70294 / BCRC 21397 / CBS 2163 / NBRC 10782 / NRRL Y-8283 / UCD 57-17) (Kluyveromyces polysporus).